Here is a 157-residue protein sequence, read N- to C-terminus: Ribosome-binding factor A (157 aa).

A disordered region spans residues 126–157; sequence RARATAQYAGDADPYKHDDEPSDDFEDDSDEE. Residues 145–157 are compositionally biased toward acidic residues; that stretch reads EPSDDFEDDSDEE.

Belongs to the RbfA family. As to quaternary structure, monomer. Binds 30S ribosomal subunits, but not 50S ribosomal subunits or 70S ribosomes.

The protein localises to the cytoplasm. Its function is as follows. One of several proteins that assist in the late maturation steps of the functional core of the 30S ribosomal subunit. Associates with free 30S ribosomal subunits (but not with 30S subunits that are part of 70S ribosomes or polysomes). Required for efficient processing of 16S rRNA. May interact with the 5'-terminal helix region of 16S rRNA. In Bifidobacterium longum (strain DJO10A), this protein is Ribosome-binding factor A.